A 156-amino-acid chain; its full sequence is Endoribonuclease YbeY (156 aa).

Zn(2+) is bound by residues His117, His121, and His127.

This sequence belongs to the endoribonuclease YbeY family. It depends on Zn(2+) as a cofactor.

The protein resides in the cytoplasm. Single strand-specific metallo-endoribonuclease involved in late-stage 70S ribosome quality control and in maturation of the 3' terminus of the 16S rRNA. The protein is Endoribonuclease YbeY of Shewanella pealeana (strain ATCC 700345 / ANG-SQ1).